The following is a 109-amino-acid chain: Glutaredoxin 4 (109 aa).

The Glutaredoxin domain occupies 4–106; sequence LDKIKKQISE…TLLADVAAKY (103 aa). A glutathione-binding site is contributed by Lys21. Cys29 lines the [2Fe-2S] cluster pocket. Residues Arg58, Phe70, and 83-84 each bind glutathione; that span reads CD.

Belongs to the glutaredoxin family. Monothiol subfamily. In terms of assembly, homodimer.

Its subcellular location is the cytoplasm. Its function is as follows. Monothiol glutaredoxin involved in the biogenesis of iron-sulfur clusters. In Pasteurella multocida (strain Pm70), this protein is Glutaredoxin 4 (grxD).